A 201-amino-acid polypeptide reads, in one-letter code: Ras-related protein Rab-1C (201 aa).

Residues 1–20 (MGCSPSKEGNGSFSSTSTSF) are disordered. Gly-2 carries N-myristoyl glycine lipidation. Residue Cys-3 is the site of S-palmitoyl cysteine attachment. GTP-binding positions include 40-48 (GDSGVGKSC), 58-65 (FTDSYIST), 88-92 (DTAGQ), 146-149 (NKCD), and 176-178 (SAK). An Effector region motif is present at residues 62–70 (YISTIGVDF).

This sequence belongs to the small GTPase superfamily. Rab family. In terms of processing, although this sequence lacks the C-terminal cysteine motifs subject to isoprenylation in other Rab proteins, it does have N-terminal myristoylation and S-palmitoylation sequence motifs.

This chain is Ras-related protein Rab-1C (Rab1C), found in Dictyostelium discoideum (Social amoeba).